A 151-amino-acid chain; its full sequence is Large ribosomal subunit protein uL22 (151 aa).

A compositionally biased stretch (polar residues) spans 1–18 (MARINYSINGDPETTSKA). Residues 1-23 (MARINYSINGDPETTSKAMGSEL) form a disordered region.

This sequence belongs to the universal ribosomal protein uL22 family. In terms of assembly, part of the 50S ribosomal subunit.

This protein binds specifically to 23S rRNA. It makes multiple contacts with different domains of the 23S rRNA in the assembled 50S subunit and ribosome. Its function is as follows. The globular domain of the protein is located near the polypeptide exit tunnel on the outside of the subunit, while an extended beta-hairpin is found that lines the wall of the exit tunnel in the center of the 70S ribosome. This Methanosarcina acetivorans (strain ATCC 35395 / DSM 2834 / JCM 12185 / C2A) protein is Large ribosomal subunit protein uL22.